The chain runs to 301 residues: Probable 5-dehydro-4-deoxyglucarate dehydratase (301 aa).

This sequence belongs to the DapA family.

It catalyses the reaction 5-dehydro-4-deoxy-D-glucarate + H(+) = 2,5-dioxopentanoate + CO2 + H2O. Its pathway is carbohydrate acid metabolism; D-glucarate degradation; 2,5-dioxopentanoate from D-glucarate: step 2/2. The sequence is that of Probable 5-dehydro-4-deoxyglucarate dehydratase from Cereibacter sphaeroides (strain ATCC 17029 / ATH 2.4.9) (Rhodobacter sphaeroides).